Here is a 403-residue protein sequence, read N- to C-terminus: Tryptophan synthase beta chain (403 aa).

Lysine 96 is modified (N6-(pyridoxal phosphate)lysine).

It belongs to the TrpB family. Tetramer of two alpha and two beta chains. Pyridoxal 5'-phosphate is required as a cofactor.

It carries out the reaction (1S,2R)-1-C-(indol-3-yl)glycerol 3-phosphate + L-serine = D-glyceraldehyde 3-phosphate + L-tryptophan + H2O. It functions in the pathway amino-acid biosynthesis; L-tryptophan biosynthesis; L-tryptophan from chorismate: step 5/5. The beta subunit is responsible for the synthesis of L-tryptophan from indole and L-serine. This Ralstonia nicotianae (strain ATCC BAA-1114 / GMI1000) (Ralstonia solanacearum) protein is Tryptophan synthase beta chain.